Here is a 293-residue protein sequence, read N- to C-terminus: Ribosomal RNA small subunit methyltransferase A (293 aa).

S-adenosyl-L-methionine is bound by residues Asn29, Leu31, Gly56, Glu77, Asp102, and Asn127.

The protein belongs to the class I-like SAM-binding methyltransferase superfamily. rRNA adenine N(6)-methyltransferase family. RsmA subfamily.

It is found in the cytoplasm. The catalysed reaction is adenosine(1518)/adenosine(1519) in 16S rRNA + 4 S-adenosyl-L-methionine = N(6)-dimethyladenosine(1518)/N(6)-dimethyladenosine(1519) in 16S rRNA + 4 S-adenosyl-L-homocysteine + 4 H(+). Functionally, specifically dimethylates two adjacent adenosines (A1518 and A1519) in the loop of a conserved hairpin near the 3'-end of 16S rRNA in the 30S particle. May play a critical role in biogenesis of 30S subunits. This Geobacillus thermodenitrificans (strain NG80-2) protein is Ribosomal RNA small subunit methyltransferase A.